The primary structure comprises 94 residues: Large ribosomal subunit protein uL23cz (94 aa).

The protein belongs to the universal ribosomal protein uL23 family. As to quaternary structure, part of the 50S ribosomal subunit.

The protein resides in the plastid. It localises to the chloroplast. Its function is as follows. Binds to 23S rRNA. The polypeptide is Large ribosomal subunit protein uL23cz (rpl23-A) (Agrostis stolonifera (Creeping bentgrass)).